We begin with the raw amino-acid sequence, 239 residues long: Phosphoribosylaminoimidazole-succinocarboxamide synthase (239 aa).

The protein belongs to the SAICAR synthetase family.

The enzyme catalyses 5-amino-1-(5-phospho-D-ribosyl)imidazole-4-carboxylate + L-aspartate + ATP = (2S)-2-[5-amino-1-(5-phospho-beta-D-ribosyl)imidazole-4-carboxamido]succinate + ADP + phosphate + 2 H(+). It participates in purine metabolism; IMP biosynthesis via de novo pathway; 5-amino-1-(5-phospho-D-ribosyl)imidazole-4-carboxamide from 5-amino-1-(5-phospho-D-ribosyl)imidazole-4-carboxylate: step 1/2. The polypeptide is Phosphoribosylaminoimidazole-succinocarboxamide synthase (Psychrobacter sp. (strain PRwf-1)).